The sequence spans 192 residues: uncharacterized protein (192 aa).

This is an uncharacterized protein from Nostoc sp. (strain PCC 7120 / SAG 25.82 / UTEX 2576).